The chain runs to 432 residues: Enolase (432 aa).

Position 167 (glutamine 167) interacts with (2R)-2-phosphoglycerate. The active-site Proton donor is glutamate 209. Mg(2+) is bound by residues aspartate 246, glutamate 290, and aspartate 317. The (2R)-2-phosphoglycerate site is built by lysine 342, arginine 371, serine 372, and lysine 393. Residue lysine 342 is the Proton acceptor of the active site.

It belongs to the enolase family. As to quaternary structure, component of the RNA degradosome, a multiprotein complex involved in RNA processing and mRNA degradation. Mg(2+) serves as cofactor.

Its subcellular location is the cytoplasm. It is found in the secreted. It localises to the cell surface. The catalysed reaction is (2R)-2-phosphoglycerate = phosphoenolpyruvate + H2O. It participates in carbohydrate degradation; glycolysis; pyruvate from D-glyceraldehyde 3-phosphate: step 4/5. In terms of biological role, catalyzes the reversible conversion of 2-phosphoglycerate (2-PG) into phosphoenolpyruvate (PEP). It is essential for the degradation of carbohydrates via glycolysis. This chain is Enolase, found in Cronobacter sakazakii (strain ATCC BAA-894) (Enterobacter sakazakii).